We begin with the raw amino-acid sequence, 1142 residues long: E3 ubiquitin-protein ligase TRIM33 (1142 aa).

Residues 1–18 are compositionally biased toward gly residues; sequence MAENKGGGEAESGGGGSG. The segment at 1–132 is disordered; that stretch reads MAENKGGGEA…PGSSSGPPLG (132 aa). The interval 1–163 is necessary for E3 ubiquitin-protein ligase activity and repression of SMAD4 signaling and transcriptional repression; the sequence is MAENKGGGEA…AEPKLLPCLH (163 aa). A compositionally biased stretch (low complexity) spans 19-42; sequence SAPVTAGAAGPTAQEAEPPLAAVL. Residues 52–64 are compositionally biased toward gly residues; that stretch reads RAGAEGGAAGPDD. Residues 65–99 are compositionally biased toward low complexity; the sequence is GGVAAASSSSAPAASVPAASVGSAVPGGAASTPAP. The span at 100–122 shows a compositional bias: pro residues; it reads AAAPAPAPAPAPAPAPAPAPAPA. An RING-type zinc finger spans residues 141 to 201; sequence CAVCQQSLQS…VGVIRCPVCR (61 aa). B box-type zinc fingers lie at residues 228-275 and 287-328; these read KSEQ…IRKK and QRPV…YQFL. Zn(2+) is bound by residues Cys233, Cys236, Cys257, His261, Cys292, His295, Cys315, and His320. Residues 315 to 417 form a necessary for oligomerization region; it reads CQLLEHKEHR…QMKLLQQQND (103 aa). Residues 315-417 are a coiled coil; sequence CQLLEHKEHR…QMKLLQQQND (103 aa). Residues Lys345, Lys350, Lys497, and Lys520 each participate in a glycyl lysine isopeptide (Lys-Gly) (interchain with G-Cter in SUMO2) cross-link. Position 531 is an asymmetric dimethylarginine; alternate (Arg531). An Omega-N-methylarginine; alternate modification is found at Arg531. A Glycyl lysine isopeptide (Lys-Gly) (interchain with G-Cter in SUMO2) cross-link involves residue Lys543. Omega-N-methylarginine is present on Arg551. Position 593 is an asymmetric dimethylarginine (Arg593). The residue at position 607 (Arg607) is an Asymmetric dimethylarginine; alternate. Position 607 is an omega-N-methylarginine; alternate (Arg607). Arg614 and Arg620 each carry asymmetric dimethylarginine. Disordered regions lie at residues 657–676, 688–707, and 718–834; these read PTSP…TSPS, NPEN…EDAG, and YISG…PPLS. The segment covering 738 to 774 has biased composition (low complexity); that stretch reads PSALSPGSSGLSNSHTPVRPPSTSSTGSRGSCGSSGR. 2 stretches are compositionally biased toward basic and acidic residues: residues 775–794 and 808–817; these read TAEK…KQEP and KQEKTEDGRR. N6-acetyllysine; alternate occurs at positions 778 and 784. Residues Lys778 and Lys784 each participate in a glycyl lysine isopeptide (Lys-Gly) (interchain with G-Cter in SUMO2); alternate cross-link. Residue Lys789 forms a Glycyl lysine isopeptide (Lys-Gly) (interchain with G-Cter in SUMO2) linkage. Residues Lys791 and Lys808 each participate in a glycyl lysine isopeptide (Lys-Gly) (interchain with G-Cter in SUMO2); alternate cross-link. Residues Lys791 and Lys808 each participate in a glycyl lysine isopeptide (Lys-Gly) (interchain with G-Cter in SUMO1); alternate cross-link. Lys808 bears the N6-acetyllysine; alternate mark. Lys811 participates in a covalent cross-link: Glycyl lysine isopeptide (Lys-Gly) (interchain with G-Cter in SUMO2). Phosphoserine is present on Ser818. Positions 822 to 834 are enriched in low complexity; that stretch reads LSSPESSLTPPLS. The residue at position 830 (Thr830) is a Phosphothreonine. Lys876 is covalently cross-linked (Glycyl lysine isopeptide (Lys-Gly) (interchain with G-Cter in SUMO2)). Ser877 carries the phosphoserine modification. Residues 902 to 949 form a PHD-type zinc finger; sequence EDWCAVCQNGGDLLCCEKCPKVFHLTCHVPTLLSFPSGDWICTFCRDI. An N6-acetyllysine modification is found at Lys966. Residue Lys968 is modified to N6-acetyllysine; alternate. Lys968 is covalently cross-linked (Glycyl lysine isopeptide (Lys-Gly) (interchain with G-Cter in SUMO2); alternate). In terms of domain architecture, Bromo spans 972-1095; the sequence is GLSPVDQRKC…LYFEDKLSEI (124 aa). Glycyl lysine isopeptide (Lys-Gly) (interchain with G-Cter in SUMO2) cross-links involve residues Lys1022 and Lys1058. The residue at position 1066 (Thr1066) is a Phosphothreonine. A Glycyl lysine isopeptide (Lys-Gly) (interchain with G-Cter in SUMO2) cross-link involves residue Lys1072. Residues 1103–1142 form a disordered region; sequence PLPEFEQDEDDGEVTEDSDEDFIQPRRKRLKSDERPVHIK. Residues 1107–1124 are compositionally biased toward acidic residues; sequence FEQDEDDGEVTEDSDEDF. A Phosphothreonine modification is found at Thr1117. A Phosphoserine modification is found at Ser1120. A Glycyl lysine isopeptide (Lys-Gly) (interchain with G-Cter in SUMO2) cross-link involves residue Lys1133. Residues 1133 to 1142 are compositionally biased toward basic and acidic residues; sequence KSDERPVHIK. The residue at position 1134 (Ser1134) is a Phosphoserine.

It belongs to the TRIM/RBCC family. In terms of assembly, homooligomer and heterooligomer with TRIM24 and TRIM28 family members. Interacts with SMAD4 in unstimulated cells. Found in a complex with SMAD2 and SMAD3 upon addition of TGF-beta. Interacts with SMAD2 and SMAD3. Interacts with SMAD4 under basal and induced conditions and, upon TGF-beta signaling, with activated SMAD2. Forms a ternary complex with SMAD4 and SMAD2 upon TGF-beta signaling. Post-translationally, sumoylated with SUMO1. Ubiquitous with high level in testis.

The protein localises to the nucleus. The enzyme catalyses S-ubiquitinyl-[E2 ubiquitin-conjugating enzyme]-L-cysteine + [acceptor protein]-L-lysine = [E2 ubiquitin-conjugating enzyme]-L-cysteine + N(6)-ubiquitinyl-[acceptor protein]-L-lysine.. The protein operates within protein modification; protein ubiquitination. In terms of biological role, acts as an E3 ubiquitin-protein ligase. Promotes SMAD4 ubiquitination, nuclear exclusion and degradation via the ubiquitin proteasome pathway. May act as a transcriptional repressor. Inhibits the transcriptional response to TGF-beta/BMP signaling cascade. Plays a role in the control of cell proliferation. Its association with SMAD2 and SMAD3 stimulates erythroid differentiation of hematopoietic stem/progenitor. Monoubiquitinates SMAD4 and acts as an inhibitor of SMAD4-dependent TGF-beta/BMP signaling cascade (Monoubiquitination of SMAD4 hampers its ability to form a stable complex with activated SMAD2/3 resulting in inhibition of TGF-beta/BMP signaling cascade). This is E3 ubiquitin-protein ligase TRIM33 (Trim33) from Mus musculus (Mouse).